Reading from the N-terminus, the 515-residue chain is tRNA pseudouridine synthase Pus10 (515 aa).

The Zn(2+) site is built by cysteine 21 and cysteine 24. Residues 42 to 85 are a coiled coil; that stretch reads KEVTYELQKYLSHGDPAEENDTPPSKKAKIEEDTSSNEHLGNCE. The interval 55-82 is disordered; that stretch reads GDPAEENDTPPSKKAKIEEDTSSNEHLG. Cysteine 96 and cysteine 99 together coordinate Zn(2+). The RNA binding forefinger loop stretch occupies residues 291–304; that stretch reads TPWIIDGERKIESS. The Nucleophile role is filled by aspartate 331. An RNA binding thumb loop region spans residues 428-443; it reads QKTPLRVLHRRPLASR.

The protein belongs to the pseudouridine synthase Pus10 family.

The protein resides in the nucleus. The protein localises to the cytoplasm. Its subcellular location is the mitochondrion. The enzyme catalyses uridine(55) in tRNA = pseudouridine(55) in tRNA. The catalysed reaction is uridine(54) in tRNA = pseudouridine(54) in tRNA. In terms of biological role, protein with different functions depending on its subcellular location: involved in miRNA processing in the nucleus and acts as a tRNA pseudouridylate synthase in the cytoplasm. In the cytoplasm, acts as a pseudouridylate synthase by catalyzing synthesis of pseudouridine(54) and pseudouridine(55) from uracil-54 and uracil-55, respectively, in the psi GC loop of a subset of tRNAs. tRNA pseudouridylate synthase activity is enhanced by the presence of 1-methyladenosine at position 53-61 of tRNAs. Does not show tRNA pseudouridylate synthase activity in the nucleus. In the nucleus, promotes primary microRNAs (pri-miRNAs) processing independently of its RNA pseudouridylate synthase activity. Binds pri-miRNAs. In Xenopus laevis (African clawed frog), this protein is tRNA pseudouridine synthase Pus10.